Consider the following 628-residue polypeptide: EF-hand calcium-binding domain-containing protein 7 (628 aa).

A compositionally biased stretch (polar residues) spans Met-1–Pro-22. The interval Met-1–Thr-24 is disordered. EF-hand domains follow at residues Thr-102–Lys-137 and Met-138–Gln-173. Residues Gln-192–Ser-231 are disordered. Phosphoserine is present on residues Ser-200 and Ser-212. The span at Glu-222–Ser-231 shows a compositional bias: polar residues. The 36-residue stretch at Glu-402 to Glu-437 folds into the EF-hand 3 domain. Residues Asp-415, Asp-417, Asn-419, and Glu-426 each contribute to the Ca(2+) site.

As to quaternary structure, component of the EvC complex composed of EFCAB7, IQCE, EVC2 and EVC; built from two subcomplexes, EVC2:EVC and EFCAB7:IQCE. Interacts (via EF-hand 1 and 2) with IQCE (via N-terminus); this interaction anchors the EVC-EVC2 complex in a signaling microdomain at the base of cilia and stimulates the Hedgehog (Hh) pathway. Interacts with EVC2 (via N-terminal end). Interacts with EVC.

The protein resides in the cell projection. It localises to the cilium membrane. Component of the EvC complex that positively regulates ciliary Hedgehog (Hh) signaling. Required for the localization of the EVC2:EVC subcomplex at the base of primary cilia. The polypeptide is EF-hand calcium-binding domain-containing protein 7 (Efcab7) (Mus musculus (Mouse)).